A 430-amino-acid chain; its full sequence is Probable sulfoacetate transporter SauU (430 aa).

The next 10 membrane-spanning stretches (helical) occupy residues 47–67 (LGLVFSAFAYPYAAMQILGGW), 83–103 (LIWGVATVLTGFAGSVLILVV), 142–162 (FARLGGAITPPVVLVIVAAAG), 165–185 (EAFIVLGAVSLGWTLLYAFFF), 228–248 (WLVTFVDFCYGWSLWVYLTWL), 263–283 (LALFTALPLMAGVVGDTLGGV), 301–321 (AVLFVGLAGSLMFIAPMTFTA), 327–347 (VILLSLSFFFLELTNAVLWSL), 362–382 (MMNTGFGVAGMVSPVVFGYLI), and 390–410 (LPFMISGALLGVGALASLFIN).

Belongs to the major facilitator superfamily.

It localises to the cell membrane. In terms of biological role, may transport sulfoacetate into the cell. The protein is Probable sulfoacetate transporter SauU (sauU) of Cupriavidus necator (strain ATCC 17699 / DSM 428 / KCTC 22496 / NCIMB 10442 / H16 / Stanier 337) (Ralstonia eutropha).